The following is a 1368-amino-acid chain: DNA-directed RNA polymerase subunit beta (1368 aa).

The protein belongs to the RNA polymerase beta chain family. In terms of assembly, the RNAP catalytic core consists of 2 alpha, 1 beta, 1 beta' and 1 omega subunit. When a sigma factor is associated with the core the holoenzyme is formed, which can initiate transcription.

The catalysed reaction is RNA(n) + a ribonucleoside 5'-triphosphate = RNA(n+1) + diphosphate. Its function is as follows. DNA-dependent RNA polymerase catalyzes the transcription of DNA into RNA using the four ribonucleoside triphosphates as substrates. The chain is DNA-directed RNA polymerase subunit beta from Legionella pneumophila (strain Paris).